We begin with the raw amino-acid sequence, 323 residues long: Palmitoyltransferase ZDHHC20-B (323 aa).

The Cytoplasmic segment spans residues methionine 1–leucine 14. Residues alanine 15–valine 35 form a helical membrane-spanning segment. At glutamate 36–valine 41 the chain is on the lumenal side. Residues tyrosine 42–phenylalanine 62 traverse the membrane as a helical segment. Residues threonine 63 to lysine 157 are Cytoplasmic-facing. Residues arginine 114–threonine 164 enclose the DHHC domain. Residue cysteine 144 is the S-palmitoyl cysteine intermediate of the active site. Residues phenylalanine 158 to leucine 178 form a helical membrane-spanning segment. Topologically, residues glutamine 179–lysine 195 are lumenal. The chain crosses the membrane as a helical span at residues phenylalanine 196–histidine 219. Over leucine 220–glutamate 323 the chain is Cytoplasmic.

Belongs to the DHHC palmitoyltransferase family.

It localises to the golgi apparatus membrane. It is found in the cell membrane. The protein localises to the cytoplasm. Its subcellular location is the perinuclear region. The protein resides in the endoplasmic reticulum membrane. It localises to the endoplasmic reticulum-Golgi intermediate compartment membrane. It catalyses the reaction L-cysteinyl-[protein] + hexadecanoyl-CoA = S-hexadecanoyl-L-cysteinyl-[protein] + CoA. The catalysed reaction is L-cysteinyl-[protein] + tetradecanoyl-CoA = S-tetradecanoyl-L-cysteinyl-[protein] + CoA. The enzyme catalyses L-cysteinyl-[protein] + octadecanoyl-CoA = S-octadecanoyl-L-cysteinyl-[protein] + CoA. In terms of biological role, palmitoyltransferase that could catalyze the addition of palmitate onto various protein substrates. Catalyzes palmitoylation of Cys residues on protein substrates and has a preference for acyl-CoA with C16 fatty acid chains but may also utilize acyl-CoA with C14 and C18 fatty acid chains. This is Palmitoyltransferase ZDHHC20-B (zdhhc20b) from Danio rerio (Zebrafish).